We begin with the raw amino-acid sequence, 428 residues long: 5'-deoxyadenosine deaminase (428 aa).

The Zn(2+) site is built by His59 and His61. Substrate contacts are provided by Glu88 and His180. His207 provides a ligand contact to Zn(2+). Substrate contacts are provided by Glu210 and Asp296. Asp296 contributes to the Zn(2+) binding site.

The protein belongs to the metallo-dependent hydrolases superfamily. MTA/SAH deaminase family. In terms of assembly, homotetramer. Zn(2+) serves as cofactor.

The enzyme catalyses 5'-deoxyadenosine + H2O + H(+) = 5'-deoxyinosine + NH4(+). It carries out the reaction S-adenosyl-L-homocysteine + H2O + H(+) = S-inosyl-L-homocysteine + NH4(+). It catalyses the reaction S-methyl-5'-thioadenosine + H2O + H(+) = S-methyl-5'-thioinosine + NH4(+). The catalysed reaction is adenosine + H2O + H(+) = inosine + NH4(+). The protein operates within amino-acid biosynthesis; S-adenosyl-L-methionine biosynthesis. Its function is as follows. Catalyzes the deamination of three SAM-derived enzymatic products, namely 5'-deoxyadenosine, S-adenosyl-L-homocysteine, and 5'-methylthioadenosine, to produce the inosine analogs. Can also deaminate adenosine. The preferred substrate for this enzyme is 5'-deoxyadenosine, but all these substrates are efficiently deaminated. Likely functions in a S-adenosyl-L-methionine (SAM) recycling pathway from S-adenosyl-L-homocysteine (SAH) produced from SAM-dependent methylation reactions. May also be involved in the recycling of 5'-deoxyadenosine, whereupon the 5'-deoxyribose moiety of 5'-deoxyinosine is further metabolized to deoxyhexoses used for the biosynthesis of aromatic amino acids in methanogens. The chain is 5'-deoxyadenosine deaminase from Methanococcus aeolicus (strain ATCC BAA-1280 / DSM 17508 / OCM 812 / Nankai-3).